The chain runs to 258 residues: Synaptosomal-associated protein 29 (258 aa).

The tract at residues 1 to 41 (MSAYPKSYNPFDDDGEDEGARPAPWRDARDLPDGPDAPADR) is disordered. Residues 18–32 (EGARPAPWRDARDLP) show a composition bias toward basic and acidic residues. A coiled-coil region spans residues 76-107 (ASSEELARQRGVLERTEKMVDKMDQDLKISQK). Residues Ser77, Ser78, and Ser114 each carry the phosphoserine modification. Phosphothreonine is present on residues Thr130 and Thr137. Positions 150 to 191 (ISTSKEQEAKYQASHPNLRKLDDTDPVPRGAGSAMSTDAYPK) are disordered. 5 positions are modified to phosphoserine: Ser163, Ser182, Ser185, Ser204, and Ser210. One can recognise a t-SNARE coiled-coil homology domain in the interval 196–258 (RAYHQKIDSN…KSTERKVRQL (63 aa)).

This sequence belongs to the SNAP-25 family. As to quaternary structure, forms a SNARE complex, composed of VAMP8, SNAP29 and STX17, involved in fusion of autophagosome with lysosome. Interacts with multiple syntaxins including STX6. Interacts with EIPR1. Interacts with STX17; this interaction is increased in the absence of TMEM39A. In terms of assembly, (Microbial infection) Interacts with Hantaan hantavirus nucleoprotein; this interaction prevents the breakdown of the viral glycoprotein N by virus-triggered autophagy. (Microbial infection) The interaction with STX17 is decreased in presence of SARS coronavirus-2/SARS-CoV-2 ORF3A protein. Found in brain, heart, kidney, liver, lung, placenta, skeletal muscle, spleen and pancreas.

The protein resides in the cytoplasm. It localises to the golgi apparatus membrane. It is found in the cytoplasmic vesicle. The protein localises to the autophagosome membrane. Its subcellular location is the cell projection. The protein resides in the cilium membrane. Its function is as follows. SNAREs, soluble N-ethylmaleimide-sensitive factor-attachment protein receptors, are essential proteins for fusion of cellular membranes. SNAREs localized on opposing membranes assemble to form a trans-SNARE complex, an extended, parallel four alpha-helical bundle that drives membrane fusion. SNAP29 is a SNARE involved in autophagy through the direct control of autophagosome membrane fusion with the lysososome membrane. Also plays a role in ciliogenesis by regulating membrane fusions. The sequence is that of Synaptosomal-associated protein 29 from Homo sapiens (Human).